Reading from the N-terminus, the 409-residue chain is Sulfide-quinone reductase (409 aa).

FAD-binding positions include 8-12 (GGRFG), 34-35 (NK), and C129. C178 acts as the Cysteine persulfide intermediate in catalysis. Residues N271, D307, and G317 each coordinate FAD. The active-site Cysteine persulfide intermediate is C350.

This sequence belongs to the SQRD family. As to quaternary structure, monomer. Requires FAD as cofactor.

The protein localises to the membrane. It catalyses the reaction n a quinone + n hydrogen sulfide + n H(+) = polysulfur(n-2) + n a quinol. Its activity is regulated as follows. Inhibited by the quinone analog 2-heptyl-4-hydroxyquinolone N-oxide (HQNO). Inactivated by iodoacetamide treatment. Inhibited by KCN. In terms of biological role, catalyzes the oxidation of sulfides, such as hydrogen sulfide, with the help of a quinone. Has the highest activity with caldariella quinone and decylubiquinone, and lower activity with naphtoquinones. Consecutive reaction cycles lead to the accumulation of a polysulfide product on the active site Cys residues; these products are released when they exceed a critical length, typically as cyclooctasulfur. This chain is Sulfide-quinone reductase, found in Acidianus ambivalens (Desulfurolobus ambivalens).